A 676-amino-acid chain; its full sequence is RNA helicase NPH-II (676 aa).

The region spanning phenylalanine 172 to histidine 347 is the Helicase ATP-binding domain. An ATP-binding site is contributed by glycine 185–threonine 192. A DEXH box motif is present at residues aspartate 296–histidine 299. In terms of domain architecture, Helicase C-terminal spans asparagine 366–asparagine 535.

The protein belongs to the DEAD box helicase family. DEAH subfamily. In terms of assembly, monomer.

Its subcellular location is the virion. The enzyme catalyses ATP + H2O = ADP + phosphate + H(+). NTP-dependent helicase that catalyzes unidirectional unwinding of 3'tailed duplex RNAs and plays an important role during transcription of early mRNAs, presumably by preventing R-loop formation behind the elongating RNA polymerase. Might also play a role in the export of newly synthesized mRNA chains out of the core into the cytoplasm. Required for replication and propagation of viral particles. This chain is RNA helicase NPH-II (OPG084), found in Bos taurus (Bovine).